Consider the following 157-residue polypeptide: Subgroup A Rous sarcoma virus receptor pg950 (157 aa).

Positions methionine 1–glycine 19 are cleaved as a signal peptide. Asparagine 20 and asparagine 24 each carry an N-linked (GlcNAc...) asparagine glycan. Residues asparagine 20–arginine 102 lie on the Extracellular side of the membrane. In terms of domain architecture, LDL-receptor class A spans serine 28–threonine 71. 3 disulfide bridges follow: cysteine 30/cysteine 47, cysteine 37/cysteine 60, and cysteine 54/cysteine 69. N-linked (GlcNAc...) asparagine glycosylation occurs at asparagine 81. A helical transmembrane segment spans residues methionine 103–glycine 125. The Cytoplasmic segment spans residues lysine 126 to serine 157.

(Microbial infection) Interacts with Rous sarcoma virus envelope protein; this interaction allows the viral attachment.

It is found in the membrane. Its function is as follows. Responsible for susceptibility to the retrovirus subgroup A Rous sarcoma virus. This chain is Subgroup A Rous sarcoma virus receptor pg950, found in Coturnix japonica (Japanese quail).